A 24-amino-acid polypeptide reads, in one-letter code: Chaperonin GroEL (24 aa).

Belongs to the chaperonin (HSP60) family. Forms a cylinder of 14 subunits composed of two heptameric rings stacked back-to-back. Interacts with the co-chaperonin GroES.

It is found in the cytoplasm. It catalyses the reaction ATP + H2O + a folded polypeptide = ADP + phosphate + an unfolded polypeptide.. Together with its co-chaperonin GroES, plays an essential role in assisting protein folding. The GroEL-GroES system forms a nano-cage that allows encapsulation of the non-native substrate proteins and provides a physical environment optimized to promote and accelerate protein folding. This Acinetobacter calcoaceticus protein is Chaperonin GroEL.